A 234-amino-acid chain; its full sequence is Uracil-DNA glycosylase (234 aa).

The active-site Proton acceptor is D68.

The protein belongs to the uracil-DNA glycosylase (UDG) superfamily. UNG family.

The protein resides in the cytoplasm. It carries out the reaction Hydrolyzes single-stranded DNA or mismatched double-stranded DNA and polynucleotides, releasing free uracil.. Functionally, excises uracil residues from the DNA which can arise as a result of misincorporation of dUMP residues by DNA polymerase or due to deamination of cytosine. The chain is Uracil-DNA glycosylase from Ruegeria sp. (strain TM1040) (Silicibacter sp.).